The primary structure comprises 390 residues: O-glycoside alpha-1,2-mannosyltransferase omh1 (390 aa).

Residue Glu279 is the Nucleophile of the active site.

The protein belongs to the glycosyltransferase 15 family.

It localises to the endoplasmic reticulum. Its subcellular location is the golgi apparatus. Mannosyltransferase involved in O-glycosylation of cell wall and secreted proteins. Plays a major role in extending alpha-1,2-linked mannose in the O-glycan pathway. The chain is O-glycoside alpha-1,2-mannosyltransferase omh1 (omh1) from Schizosaccharomyces pombe (strain 972 / ATCC 24843) (Fission yeast).